We begin with the raw amino-acid sequence, 85 residues long: ADLDNGEKVFSANCAACHAGGNNAIMPDKTLKKDVLEANSMNTIDAITYQVQNGKNAMPAFGGRLVDEDIEDAANYVLSQSEKGW.

Positions 14, 17, 18, and 58 each coordinate heme c.

The protein belongs to the cytochrome c family. PetJ subfamily. As to quaternary structure, monomer. Binds 1 heme c group covalently per subunit.

The protein resides in the plastid. It is found in the chloroplast thylakoid lumen. Functions as an electron carrier between membrane-bound cytochrome b6-f and photosystem I in oxygenic photosynthesis. In Pyropia tenera (Nori), this protein is Cytochrome c6 (petJ).